Reading from the N-terminus, the 1123-residue chain is uncharacterized protein (1123 aa).

This is an uncharacterized protein from Ictaluridae (bullhead catfishes).